The following is a 411-amino-acid chain: Serine--tRNA ligase (411 aa).

226–228 lines the L-serine pocket; sequence TSE. An ATP-binding site is contributed by 257–259; the sequence is RKE. Glu280 lines the L-serine pocket. ATP is bound at residue 344 to 347; sequence EISS. L-serine is bound at residue Ser379.

Belongs to the class-II aminoacyl-tRNA synthetase family. Type-1 seryl-tRNA synthetase subfamily. In terms of assembly, homodimer. The tRNA molecule binds across the dimer.

It localises to the cytoplasm. The catalysed reaction is tRNA(Ser) + L-serine + ATP = L-seryl-tRNA(Ser) + AMP + diphosphate + H(+). It carries out the reaction tRNA(Sec) + L-serine + ATP = L-seryl-tRNA(Sec) + AMP + diphosphate + H(+). Its pathway is aminoacyl-tRNA biosynthesis; selenocysteinyl-tRNA(Sec) biosynthesis; L-seryl-tRNA(Sec) from L-serine and tRNA(Sec): step 1/1. Catalyzes the attachment of serine to tRNA(Ser). Is also able to aminoacylate tRNA(Sec) with serine, to form the misacylated tRNA L-seryl-tRNA(Sec), which will be further converted into selenocysteinyl-tRNA(Sec). The polypeptide is Serine--tRNA ligase (Campylobacter jejuni subsp. jejuni serotype O:23/36 (strain 81-176)).